The sequence spans 260 residues: Exosome complex component Rrp42 (260 aa).

This sequence belongs to the RNase PH family. Rrp42 subfamily. Component of the archaeal exosome complex. Forms a hexameric ring-like arrangement composed of 3 Rrp41-Rrp42 heterodimers. The hexameric ring associates with a trimer of Rrp4 and/or Csl4 subunits.

The protein resides in the cytoplasm. Its function is as follows. Non-catalytic component of the exosome, which is a complex involved in RNA degradation. Contributes to the structuring of the Rrp41 active site. The sequence is that of Exosome complex component Rrp42 from Methanocella arvoryzae (strain DSM 22066 / NBRC 105507 / MRE50).